A 79-amino-acid chain; its full sequence is uncharacterized protein (79 aa).

The N-terminal stretch at 1 to 19 (MKYVALAFVLSLVILQISA) is a signal peptide.

In terms of tissue distribution, nacreous layer of shell (at protein level). Expressed primarily in the mantle with highest level in the mantle pallium and lower level in the mantle edge.

The protein resides in the secreted. This is an uncharacterized protein from Pinctada maxima (Silver-lipped pearl oyster).